Consider the following 281-residue polypeptide: Protease HtpX homolog (281 aa).

The next 2 helical transmembrane spans lie at 6–26 (VWLL…AIGG) and 28–48 (SGAL…YYYS). Residue His-130 participates in Zn(2+) binding. The active site involves Glu-131. His-134 lines the Zn(2+) pocket. 2 helical membrane-spanning segments follow: residues 140–160 (VLIG…SNIV) and 181–201 (IASL…QLAI). Position 206 (Glu-206) interacts with Zn(2+).

It belongs to the peptidase M48B family. Zn(2+) is required as a cofactor.

Its subcellular location is the cell membrane. The sequence is that of Protease HtpX homolog from Pelotomaculum thermopropionicum (strain DSM 13744 / JCM 10971 / SI).